Reading from the N-terminus, the 824-residue chain is MEEKYLPSRVEEKWQKFWEANKSFRATEDKTREKYYLLEMFPYPSGRIHMGHVRNYSIGDVIARFKRMKGFNVLHPMGWDAFGMPAENAAIQNKSHPAKWTYENIAYMRGQLKKMGLSYDWDRELATCDVDYYKWEQLIFLQMYKKGLAYKKISSVNWCPKCETVLANEQVEDGCCWRCDSNVDQKELEQWSFRITDYAEELLEYTYKLPGWPERVLTMQRNWIGRSTGCEIDFPIEGQMDKIKVFTTRQDTLFGATFMSLAPEHPMALELTTPENMATVAAFIEKVKKTDRIRRTAEDFEKEGVFTGSYCINPVTNRRMPVYLANFVLTDYGTGAVMAVPTHDQRDFEFARKYDIPMGVVIQPEGEALDPQTMAEAFTAEGIMVNSGRFDGLKSGAAKEQIADYLEKEGIGKKTVNYRLRDWGISRQRYWGNPIPMIYCDLCGAVPVPETDLPVVLPMDATFTGEGGNPLDKVDSFVNTTCPQCGEAARRETDTMDTFVESSWYFLRYCCPDFVSGPLDKEKTEYWMSVDQYIGGIEHAVMHLLYARFFTKVLRDLGYCDIDEPFTNLLTQGMVIKDGAKMSKSKGNVVDPNALIDKYGADTARLFSLFAAPPEKDLDWSDQGVDGSFRFLNRVWKLVYDTLPIIGGAGALDPAGLTNEGKGLRRQVHKTIRKVTEDIEERFHFNTAIAATMELVNTIQSFEPKNSPQNAPVLKEAIESVVMLLAPFVPHFTEELWAQLGNNKSLEQAGWPAFDSAAAIDEELLVVVQVNGKLRGKLTVAVTASEDDVKGAALADERVKPFIEGKSVKKIVYVPGKLVNIVVG.

The 'HIGH' region motif lies at 42-52 (PYPSGRIHMGH). Positions 581 to 585 (KMSKS) match the 'KMSKS' region motif. Residue lysine 584 participates in ATP binding.

It belongs to the class-I aminoacyl-tRNA synthetase family.

The protein localises to the cytoplasm. The enzyme catalyses tRNA(Leu) + L-leucine + ATP = L-leucyl-tRNA(Leu) + AMP + diphosphate. This is Leucine--tRNA ligase from Geotalea uraniireducens (strain Rf4) (Geobacter uraniireducens).